The sequence spans 277 residues: Phosphatidylglycerol--prolipoprotein diacylglyceryl transferase (277 aa).

The next 4 membrane-spanning stretches (helical) occupy residues Ile-18 to Ala-38, Ile-51 to Tyr-71, Ile-89 to Ile-109, and Ile-116 to Gly-136. Residue Arg-137 coordinates a 1,2-diacyl-sn-glycero-3-phospho-(1'-sn-glycerol). Transmembrane regions (helical) follow at residues Gln-177 to Ile-197, Gly-205 to Met-225, and Phe-235 to Tyr-255.

The protein belongs to the Lgt family.

It is found in the cell membrane. The enzyme catalyses L-cysteinyl-[prolipoprotein] + a 1,2-diacyl-sn-glycero-3-phospho-(1'-sn-glycerol) = an S-1,2-diacyl-sn-glyceryl-L-cysteinyl-[prolipoprotein] + sn-glycerol 1-phosphate + H(+). It participates in protein modification; lipoprotein biosynthesis (diacylglyceryl transfer). Functionally, catalyzes the transfer of the diacylglyceryl group from phosphatidylglycerol to the sulfhydryl group of the N-terminal cysteine of a prolipoprotein, the first step in the formation of mature lipoproteins. This chain is Phosphatidylglycerol--prolipoprotein diacylglyceryl transferase, found in Listeria monocytogenes serovar 1/2a (strain ATCC BAA-679 / EGD-e).